A 265-amino-acid polypeptide reads, in one-letter code: Adenosylcobinamide-GDP ribazoletransferase (265 aa).

A run of 7 helical transmembrane segments spans residues 40–60 (IAYA…VVLV), 67–87 (LPAF…TGAF), 121–141 (GGCA…ALVA), 150–170 (LALV…LLAL), 191–211 (LACA…GFGI), 213–233 (TAFA…RLSG), and 243–263 (VAGA…LIFP).

The protein belongs to the CobS family. The cofactor is Mg(2+).

It localises to the cell inner membrane. It carries out the reaction alpha-ribazole + adenosylcob(III)inamide-GDP = adenosylcob(III)alamin + GMP + H(+). The enzyme catalyses alpha-ribazole 5'-phosphate + adenosylcob(III)inamide-GDP = adenosylcob(III)alamin 5'-phosphate + GMP + H(+). It participates in cofactor biosynthesis; adenosylcobalamin biosynthesis; adenosylcobalamin from cob(II)yrinate a,c-diamide: step 7/7. In terms of biological role, joins adenosylcobinamide-GDP and alpha-ribazole to generate adenosylcobalamin (Ado-cobalamin). Also synthesizes adenosylcobalamin 5'-phosphate from adenosylcobinamide-GDP and alpha-ribazole 5'-phosphate. The protein is Adenosylcobinamide-GDP ribazoletransferase of Xanthobacter autotrophicus (strain ATCC BAA-1158 / Py2).